Reading from the N-terminus, the 61-residue chain is Large ribosomal subunit protein bL32 (61 aa).

Positions 1 to 16 (MAVPRRKTSPSRRGMR) are enriched in basic residues. The disordered stretch occupies residues 1-61 (MAVPRRKTSP…RQVLKVKKED (61 aa)). The segment covering 17-44 (RSADALKKPTYVEDKDSGELRRPHHLDL) has biased composition (basic and acidic residues).

Belongs to the bacterial ribosomal protein bL32 family.

The sequence is that of Large ribosomal subunit protein bL32 from Afipia carboxidovorans (strain ATCC 49405 / DSM 1227 / KCTC 32145 / OM5) (Oligotropha carboxidovorans).